A 362-amino-acid chain; its full sequence is tRNA 2-selenouridine synthase (362 aa).

One can recognise a Rhodanese domain in the interval 14 to 137; that stretch reads LANETPIIDV…LRQATIEMTN (124 aa). The active-site S-selanylcysteine intermediate is the C97.

Belongs to the SelU family. As to quaternary structure, monomer.

The catalysed reaction is 5-methylaminomethyl-2-thiouridine(34) in tRNA + selenophosphate + (2E)-geranyl diphosphate + H2O + H(+) = 5-methylaminomethyl-2-selenouridine(34) in tRNA + (2E)-thiogeraniol + phosphate + diphosphate. It carries out the reaction 5-methylaminomethyl-2-thiouridine(34) in tRNA + (2E)-geranyl diphosphate = 5-methylaminomethyl-S-(2E)-geranyl-thiouridine(34) in tRNA + diphosphate. It catalyses the reaction 5-methylaminomethyl-S-(2E)-geranyl-thiouridine(34) in tRNA + selenophosphate + H(+) = 5-methylaminomethyl-2-(Se-phospho)selenouridine(34) in tRNA + (2E)-thiogeraniol. The enzyme catalyses 5-methylaminomethyl-2-(Se-phospho)selenouridine(34) in tRNA + H2O = 5-methylaminomethyl-2-selenouridine(34) in tRNA + phosphate. Its function is as follows. Involved in the post-transcriptional modification of the uridine at the wobble position (U34) of tRNA(Lys), tRNA(Glu) and tRNA(Gln). Catalyzes the conversion of 2-thiouridine (S2U-RNA) to 2-selenouridine (Se2U-RNA). Acts in a two-step process involving geranylation of 2-thiouridine (S2U) to S-geranyl-2-thiouridine (geS2U) and subsequent selenation of the latter derivative to 2-selenouridine (Se2U) in the tRNA chain. The sequence is that of tRNA 2-selenouridine synthase from Proteus mirabilis (strain HI4320).